Here is a 232-residue protein sequence, read N- to C-terminus: Large ribosomal subunit protein uL1 (232 aa).

Belongs to the universal ribosomal protein uL1 family. Part of the 50S ribosomal subunit.

In terms of biological role, binds directly to 23S rRNA. The L1 stalk is quite mobile in the ribosome, and is involved in E site tRNA release. Protein L1 is also a translational repressor protein, it controls the translation of the L11 operon by binding to its mRNA. The polypeptide is Large ribosomal subunit protein uL1 (Chlamydia pneumoniae (Chlamydophila pneumoniae)).